The sequence spans 494 residues: Membrane-bound lytic murein transglycosylase F (494 aa).

The first 20 residues, 1–20 (MIKYLYVILLGLLLSGCQPA), serve as a signal peptide directing secretion. The interval 21–259 (EVVEIEASPK…HLNEKYFGHV (239 aa)) is non-LT domain. The interval 260-494 (KRFDYVDTRA…LKPKLGAGQP (235 aa)) is LT domain. The active site involves E304. Polar residues predominate over residues 473–485 (QSLASDSKTNNTL). The disordered stretch occupies residues 473 to 494 (QSLASDSKTNNTLKPKLGAGQP).

This sequence in the N-terminal section; belongs to the bacterial solute-binding protein 3 family. The protein in the C-terminal section; belongs to the transglycosylase Slt family.

The protein localises to the cell outer membrane. It catalyses the reaction Exolytic cleavage of the (1-&gt;4)-beta-glycosidic linkage between N-acetylmuramic acid (MurNAc) and N-acetylglucosamine (GlcNAc) residues in peptidoglycan, from either the reducing or the non-reducing ends of the peptidoglycan chains, with concomitant formation of a 1,6-anhydrobond in the MurNAc residue.. Functionally, murein-degrading enzyme that degrades murein glycan strands and insoluble, high-molecular weight murein sacculi, with the concomitant formation of a 1,6-anhydromuramoyl product. Lytic transglycosylases (LTs) play an integral role in the metabolism of the peptidoglycan (PG) sacculus. Their lytic action creates space within the PG sacculus to allow for its expansion as well as for the insertion of various structures such as secretion systems and flagella. This chain is Membrane-bound lytic murein transglycosylase F, found in Shewanella denitrificans (strain OS217 / ATCC BAA-1090 / DSM 15013).